A 496-amino-acid chain; its full sequence is Angiopoietin-2 (496 aa).

A signal peptide spans 1 to 18; it reads MWQLVFLTLSCDLAVATA. N-linked (GlcNAc...) asparagine glycosylation is found at asparagine 90, asparagine 120, asparagine 134, asparagine 152, asparagine 241, and asparagine 304. The stretch at 167 to 249 forms a coiled coil; sequence STNKLEKQIL…VNNSVLQKQQ (83 aa). The 221-residue stretch at 275–495 folds into the Fibrinogen C-terminal domain; that stretch reads KDEQIIFRDC…ATTMMIRPAD (221 aa). Cysteine 284 and cysteine 313 form a disulfide bridge. Aspartate 429, aspartate 431, cysteine 433, and cysteine 435 together coordinate Ca(2+). 2 disulfides stabilise this stretch: cysteine 433–cysteine 435 and cysteine 437–cysteine 450.

As to quaternary structure, interacts with TEK/TIE2, competing for the same binding site as ANGPT1. Interacts with ITGA5. Interacts with SVEP1/polydom. Interacts with THBD; this interaction significantly inhibits the generation of activated PC and TAFIa/CPB2 by the thrombin/thrombomodulin complex.

It is found in the secreted. In terms of biological role, binds to TEK/TIE2, competing for the ANGPT1 binding site, and modulating ANGPT1 signaling. Can induce tyrosine phosphorylation of TEK/TIE2 in the absence of ANGPT1. In the absence of angiogenic inducers, such as VEGF, ANGPT2-mediated loosening of cell-matrix contacts may induce endothelial cell apoptosis with consequent vascular regression. In concert with VEGF, it may facilitate endothelial cell migration and proliferation, thus serving as a permissive angiogenic signal. Involved in the regulation of lymphangiogenesis. The chain is Angiopoietin-2 (ANGPT2) from Bos taurus (Bovine).